The primary structure comprises 488 residues: Ribulose bisphosphate carboxylase large chain 1 (488 aa).

Substrate is bound by residues N127 and T177. The active-site Proton acceptor is the K179. K181 contributes to the substrate binding site. Mg(2+)-binding residues include K205, D207, and E208. At K205 the chain carries N6-carboxylysine. H297 acts as the Proton acceptor in catalysis. Substrate contacts are provided by R298, H330, and S382.

This sequence belongs to the RuBisCO large chain family. Type I subfamily. As to quaternary structure, heterohexadecamer of 8 large chains and 8 small chains. Requires Mg(2+) as cofactor.

The enzyme catalyses 2 (2R)-3-phosphoglycerate + 2 H(+) = D-ribulose 1,5-bisphosphate + CO2 + H2O. It carries out the reaction D-ribulose 1,5-bisphosphate + O2 = 2-phosphoglycolate + (2R)-3-phosphoglycerate + 2 H(+). Functionally, ruBisCO catalyzes two reactions: the carboxylation of D-ribulose 1,5-bisphosphate, the primary event in carbon dioxide fixation, as well as the oxidative fragmentation of the pentose substrate. Both reactions occur simultaneously and in competition at the same active site. This is Ribulose bisphosphate carboxylase large chain 1 from Bradyrhizobium sp. (strain BTAi1 / ATCC BAA-1182).